The sequence spans 253 residues: Alpha-acetolactate decarboxylase (253 aa).

Belongs to the alpha-acetolactate decarboxylase family.

It carries out the reaction (2S)-2-acetolactate + H(+) = (R)-acetoin + CO2. The protein operates within polyol metabolism; (R,R)-butane-2,3-diol biosynthesis; (R,R)-butane-2,3-diol from pyruvate: step 2/3. Converts acetolactate into acetoin. The polypeptide is Alpha-acetolactate decarboxylase (alsD) (Bacillus licheniformis (strain ATCC 14580 / DSM 13 / JCM 2505 / CCUG 7422 / NBRC 12200 / NCIMB 9375 / NCTC 10341 / NRRL NRS-1264 / Gibson 46)).